The following is a 1567-amino-acid chain: Myosin-2A (1567 aa).

Residues 4–57 (EVGTRCWYPSKEQGWIGAEVTKNDLKDGTYFMELTLEDNEVVNVETKDLTNEKD) enclose the Myosin N-terminal SH3-like domain. The Myosin motor domain maps to 70–786 (ESTEDLTTLS…MLAYFEKLRS (717 aa)). 164–171 (GESGAGKT) is a binding site for ATP. The actin-binding stretch occupies residues 446-526 (FIGVLDIYGF…LGILSLLDEE (81 aa)). Positions 619–640 (EEAKKNAASQDQKQLKKPTPIR) are disordered. IQ domains lie at 789-818 (MNSAIVLIQKHIRSKYYRKQYMLMKASLSL), 812-836 (MKASLSLLGAYSKGTVIRQRVEYEL), 837-859 (EQHAATLIQTMYRGYSKRSYISG), 860-884 (VISSIVKLQSRIREELEQREMQSKY), 885-907 (ESNAAISIQSRIRAFVPRKAYES), and 908-937 (KRRDTIVVQSLIRRRIAQRDFKKLKADAKS). A coiled-coil region spans residues 947–1091 (KLENKVIQLT…LAHLQTSIAL (145 aa)). The tract at residues 1092 to 1567 (GTVTTNTNIV…VAQQVTVPDA (476 aa)) is non alpha-helical, tail domain. The Dilute domain maps to 1230 to 1505 (AQVLTTIQKV…LKYVADIVKK (276 aa)).

Belongs to the TRAFAC class myosin-kinesin ATPase superfamily. Myosin family. As to quaternary structure, homodimer. Interacts with calmodulin (CMD1) and the myosin light chain MLC1 through its IQ repeats.

In terms of biological role, myosin heavy chain that is required for the cell cycle-regulated transport of various organelles and proteins for their segregation. Functions by binding with its tail domain to receptor proteins on organelles and exerting force with its N-terminal motor domain against actin filaments, thereby transporting its cargo along polarized actin cables. The protein is Myosin-2A (MYO2A) of Naumovozyma castellii (Yeast).